A 670-amino-acid chain; its full sequence is Transcription factor 4 (670 aa).

The essential for MYOD1 inhibition stretch occupies residues 1-83 (MHHQQRMAAL…GTPYDHMTSR (83 aa)). 6 disordered regions span residues 24–244 (AMFS…LGNS), 262–320 (LSYP…SQTG), 335–378 (HTNN…EGPL), 406–426 (PSTAVPGGHGDMHGIMGPSHN), 465–573 (SLLP…MANN), and 637–670 (KRREEEKVSSEPPPLSLAGPHPGMGDAANHMGQM). Positions 29-49 (PVSSGKNGPTSLASGHFTGSN) are enriched in polar residues. S66, S87, and S92 each carry phosphoserine. Polar residues-rich tracts occupy residues 107–125 (GSYSSYGRENVQGCHQQSL), 136–154 (GTLSPTKPGSQYYQYSSNN), 205–215 (PAASTFPSSFF), and 265–305 (PSHS…TDSI). Over residues 336-347 (TNNSFSSNPSTP) the composition is skewed to low complexity. The span at 364 to 373 (NGGQASSSPN) shows a compositional bias: polar residues. S371 is modified (phosphoserine). The leucine-zipper stretch occupies residues 378 to 399 (LHSLQSRIEDRLERLDDAIHVL). Composition is skewed to low complexity over residues 466 to 479 (LLPNQVPVPQLPVQ) and 502 to 511 (GQSVSSGSSE). The residue at position 514 (S514) is a Phosphoserine. Basic and acidic residues-rich tracts occupy residues 526–542 (KSSEDKKLDDDKKDIKS) and 558–573 (PEQKAEREKERRMANN). The bHLH domain maps to 567-620 (ERRMANNARERLRVRDINEAFKELGRMVQLHLKSDKPQTKLLILHQAVAVILSL). A class A specific domain region spans residues 622-645 (QQVRERNLNPKAACLKRREEEKVS).

In terms of assembly, efficient DNA binding requires dimerization with another bHLH protein. Isoform 2 seems to form inactive heterodimers with MYOD1. Interacts with HIVEP2. Interacts with NEUROD2. Interacts with AGBL1. Interacts with BHLHA9. In terms of tissue distribution, expressed in the cerebral cortex, Purkinje and granule cell layers of the cerebellum, olfactory neuroepithelium, pyramidal cells of hippocampal layers CA1-CA4, and in the granular cells of the dentate gyrus.

The protein resides in the nucleus. In terms of biological role, transcription factor that binds to the immunoglobulin enhancer Mu-E5/KE5-motif. Involved in the initiation of neuronal differentiation. Activates transcription by binding to the E box (5'-CANNTG-3'). Isoform 2 inhibits MYOD1 activation of the cardiac alpha-actin promoter. Binds to the E-box present in the somatostatin receptor 2 initiator element (SSTR2-INR) to activate transcription. May have a regulatory function in developmental processes as well as during neuronal plasticity. The protein is Transcription factor 4 (Tcf4) of Mus musculus (Mouse).